Reading from the N-terminus, the 222-residue chain is MVDEVEKPASLEESKTNTREVEEGAEEVIESDDTMSSLGNPCKAMKHPLEHSWTFWFDNPSGKSKQAAWGSSIRPIYTFSTVEDFWSVYNNIHHPSKLAVGADFHCFKNKIEPKWEDPVCASGGKWTMSFSRGKSDTCWLYTLLAMIGEQFDCGDEICGAVINVRVRQEKIALWTRNAANETAQVSIGKQWKEFLDYNDSIGFIFHDDAKKLDRAAKNRYSV.

Basic and acidic residues predominate over residues 1–22 (MVDEVEKPASLEESKTNTREVE). The tract at residues 1 to 37 (MVDEVEKPASLEESKTNTREVEEGAEEVIESDDTMSS) is disordered. Positions 23–33 (EGAEEVIESDD) are enriched in acidic residues. EIF4G-binding stretches follow at residues 47–50 (HPLE) and 57–93 (FDNP…NNIH). MRNA is bound by residues 65–70 (KQAAWG), Lys97, and 115–116 (WE). A disulfide bridge connects residues Cys120 and Cys158. Residues 141–150 (YTLLAMIGEQ) are EIF4G-binding. Residues 165–170 (RVRQEK) and 210–214 (KKLDR) contribute to the mRNA site.

This sequence belongs to the eukaryotic initiation factor 4E family. EIF4F is a multi-subunit complex, the composition of which varies with external and internal environmental conditions. It is composed of at least EIF4A, EIF4E and EIF4G. EIF4E is also known to interact with other partners. In higher plants two isoforms of EIF4F have been identified, named isoform EIF4F and isoform EIF(iso)4F. Isoform EIF4F has subunits p220 and p26, whereas isoform EIF(iso)4F has subunits p82 and p28. Post-translationally, according to the redox status, the Cys-120-Cys-158 disulfide bridge may have a role in regulating protein function by affecting its ability to bind capped mRNA. Expressed ubiquitously in seedlings, roots, leaves, sepals, petals, anthers and dehisced pollen, with highest levels in pollen, maturing anthers and roots. Strongly expressed in susceptible plants but not in resistant ones.

It is found in the nucleus. Its subcellular location is the cytoplasm. Its function is as follows. Component of the protein complex eIF4F, which is involved in the recognition of the mRNA cap, ATP-dependent unwinding of 5'-terminal secondary structure and recruitment of mRNA to the ribosome. Recognizes and binds the 7-methylguanosine-containing mRNA cap during an early step in the initiation of protein synthesis and facilitates ribosome binding by inducing the unwinding of the mRNAs secondary structures. Key component of recessive resistance to potyviruses. Functionally, (Microbial infection) Susceptibility host factor required for viral infection (e.g. potato virus Y (PVY) and pepper mottle virus (PepMoV)) by recruiting viral RNAs to the host ribosomal complex via an interaction with viral genome-linked protein (VPg). The protein is Eukaryotic translation initiation factor 4E-1 of Nicotiana tabacum (Common tobacco).